A 210-amino-acid chain; its full sequence is Large ribosomal subunit protein uL4 (210 aa).

Residues 41–79 (MANARQGTASTKTRAEVRGGGRKPWRQKGTGRARAGSNR) are disordered. Residues 43-52 (NARQGTASTK) are compositionally biased toward polar residues. Positions 60-71 (GGRKPWRQKGTG) are enriched in basic residues.

Belongs to the universal ribosomal protein uL4 family. Part of the 50S ribosomal subunit.

In terms of biological role, one of the primary rRNA binding proteins, this protein initially binds near the 5'-end of the 23S rRNA. It is important during the early stages of 50S assembly. It makes multiple contacts with different domains of the 23S rRNA in the assembled 50S subunit and ribosome. Functionally, forms part of the polypeptide exit tunnel. The chain is Large ribosomal subunit protein uL4 from Cyanothece sp. (strain PCC 7425 / ATCC 29141).